Reading from the N-terminus, the 181-residue chain is Transcription termination/antitermination protein NusG (181 aa).

One can recognise a KOW domain in the interval 130–158 (PGETVRVNDGPFSDFNGIVEEVDYEKNRL).

It belongs to the NusG family. As to quaternary structure, monomer. Interacts with the transcription termination factor Rho and with RNA polymerase.

In terms of biological role, participates in transcription elongation, termination and antitermination. In the absence of Rho, increases the rate of transcription elongation by the RNA polymerase (RNAP), probably by partially suppressing pausing. In the presence of Rho, modulates most Rho-dependent termination events by interacting with the RNAP to render the complex more susceptible to the termination activity of Rho. May be required to overcome a kinetic limitation of Rho to function at certain terminators. Also involved in ribosomal RNA transcriptional antitermination. In Buchnera aphidicola subsp. Baizongia pistaciae (strain Bp), this protein is Transcription termination/antitermination protein NusG.